A 252-amino-acid polypeptide reads, in one-letter code: 1-(5-phosphoribosyl)-5-[(5-phosphoribosylamino)methylideneamino] imidazole-4-carboxamide isomerase (252 aa).

Asp-10 functions as the Proton acceptor in the catalytic mechanism. The active-site Proton donor is Asp-129.

It belongs to the HisA/HisF family.

The protein resides in the cytoplasm. The catalysed reaction is 1-(5-phospho-beta-D-ribosyl)-5-[(5-phospho-beta-D-ribosylamino)methylideneamino]imidazole-4-carboxamide = 5-[(5-phospho-1-deoxy-D-ribulos-1-ylimino)methylamino]-1-(5-phospho-beta-D-ribosyl)imidazole-4-carboxamide. It functions in the pathway amino-acid biosynthesis; L-histidine biosynthesis; L-histidine from 5-phospho-alpha-D-ribose 1-diphosphate: step 4/9. This is 1-(5-phosphoribosyl)-5-[(5-phosphoribosylamino)methylideneamino] imidazole-4-carboxamide isomerase from Frankia casuarinae (strain DSM 45818 / CECT 9043 / HFP020203 / CcI3).